A 434-amino-acid polypeptide reads, in one-letter code: Pectate lyase (434 aa).

The signal sequence occupies residues methionine 1–alanine 22. N-linked (GlcNAc...) asparagine glycans are attached at residues asparagine 68 and asparagine 97. Ca(2+)-binding residues include aspartate 232, aspartate 256, and aspartate 260. Residue arginine 312 is part of the active site.

It belongs to the polysaccharide lyase 1 family. Requires Ca(2+) as cofactor.

The catalysed reaction is Eliminative cleavage of (1-&gt;4)-alpha-D-galacturonan to give oligosaccharides with 4-deoxy-alpha-D-galact-4-enuronosyl groups at their non-reducing ends.. Its pathway is glycan metabolism; pectin degradation; 2-dehydro-3-deoxy-D-gluconate from pectin: step 2/5. In Lilium longiflorum (Trumpet lily), this protein is Pectate lyase.